The chain runs to 311 residues: Ribosomal protein L11 methyltransferase (311 aa).

The S-adenosyl-L-methionine site is built by Thr162, Gly183, Asp205, and Asn248.

This sequence belongs to the methyltransferase superfamily. PrmA family.

It localises to the cytoplasm. The enzyme catalyses L-lysyl-[protein] + 3 S-adenosyl-L-methionine = N(6),N(6),N(6)-trimethyl-L-lysyl-[protein] + 3 S-adenosyl-L-homocysteine + 3 H(+). Functionally, methylates ribosomal protein L11. The chain is Ribosomal protein L11 methyltransferase from Bacillus velezensis (strain DSM 23117 / BGSC 10A6 / LMG 26770 / FZB42) (Bacillus amyloliquefaciens subsp. plantarum).